Here is a 331-residue protein sequence, read N- to C-terminus: Pectate lyase B (331 aa).

Positions 1–25 (MKFTGSPLLWPSWLPLPAPPPPLPS) are cleaved as a signal peptide. N99 is a glycosylation site (N-linked (GlcNAc...) asparagine). Ca(2+)-binding residues include D139, D169, and D173. R226 is a catalytic residue.

The protein belongs to the polysaccharide lyase 1 family. The cofactor is Ca(2+).

The protein localises to the secreted. It carries out the reaction Eliminative cleavage of (1-&gt;4)-alpha-D-galacturonan to give oligosaccharides with 4-deoxy-alpha-D-galact-4-enuronosyl groups at their non-reducing ends.. Its pathway is glycan metabolism; pectin degradation; 2-dehydro-3-deoxy-D-gluconate from pectin: step 2/5. In terms of biological role, acts as a virulence factor active in plant tissue maceration. The chain is Pectate lyase B (PLB) from Colletotrichum gloeosporioides (Anthracnose fungus).